Reading from the N-terminus, the 283-residue chain is Phosphatidylglycerol--prolipoprotein diacylglyceryl transferase (283 aa).

The next 3 helical transmembrane spans lie at 17–37 (LAVRWYALSYILGFILFTFLG), 56–76 (FLTWGILGVILGGRLGYVLFY), and 92–112 (WEGGMSFHGGFLGVVIAIWLF). A 1,2-diacyl-sn-glycero-3-phospho-(1'-sn-glycerol) is bound at residue Arg-139. 2 helical membrane passes run 222–242 (GQTAALFLGGYGVFRFIAEFA) and 255–275 (GLSMGQWLSVPMIVLGIVGFV).

This sequence belongs to the Lgt family.

The protein resides in the cell inner membrane. It carries out the reaction L-cysteinyl-[prolipoprotein] + a 1,2-diacyl-sn-glycero-3-phospho-(1'-sn-glycerol) = an S-1,2-diacyl-sn-glyceryl-L-cysteinyl-[prolipoprotein] + sn-glycerol 1-phosphate + H(+). It functions in the pathway protein modification; lipoprotein biosynthesis (diacylglyceryl transfer). Functionally, catalyzes the transfer of the diacylglyceryl group from phosphatidylglycerol to the sulfhydryl group of the N-terminal cysteine of a prolipoprotein, the first step in the formation of mature lipoproteins. This Neisseria gonorrhoeae (strain ATCC 700825 / FA 1090) protein is Phosphatidylglycerol--prolipoprotein diacylglyceryl transferase.